A 452-amino-acid polypeptide reads, in one-letter code: Phosphoglucosamine mutase (452 aa).

Serine 108 functions as the Phosphoserine intermediate in the catalytic mechanism. Positions 108, 247, 249, and 251 each coordinate Mg(2+). Position 108 is a phosphoserine (serine 108).

The protein belongs to the phosphohexose mutase family. Requires Mg(2+) as cofactor. In terms of processing, activated by phosphorylation.

It carries out the reaction alpha-D-glucosamine 1-phosphate = D-glucosamine 6-phosphate. Catalyzes the conversion of glucosamine-6-phosphate to glucosamine-1-phosphate. The polypeptide is Phosphoglucosamine mutase (Paraburkholderia phymatum (strain DSM 17167 / CIP 108236 / LMG 21445 / STM815) (Burkholderia phymatum)).